The following is a 341-amino-acid chain: ATPase GET3 (341 aa).

An ATP-binding site is contributed by 34-41; sequence KGGVGKTT. Aspartate 63 is an active-site residue. ATP-binding residues include glutamate 245 and asparagine 272. Zn(2+) is bound by residues cysteine 283 and cysteine 286.

The protein belongs to the arsA ATPase family. In terms of assembly, homodimer.

It is found in the cytoplasm. The protein localises to the endoplasmic reticulum. ATPase required for the post-translational delivery of tail-anchored (TA) proteins to the endoplasmic reticulum. Recognizes and selectively binds the transmembrane domain of TA proteins in the cytosol. This complex then targets to the endoplasmic reticulum by membrane-bound receptors, where the tail-anchored protein is released for insertion. This process is regulated by ATP binding and hydrolysis. ATP binding drives the homodimer towards the closed dimer state, facilitating recognition of newly synthesized TA membrane proteins. ATP hydrolysis is required for insertion. Subsequently, the homodimer reverts towards the open dimer state, lowering its affinity for the membrane-bound receptor, and returning it to the cytosol to initiate a new round of targeting. The sequence is that of ATPase GET3 from Paracoccidioides brasiliensis (strain Pb18).